The following is a 541-amino-acid chain: MHWQTHTVFNQPIPLNNSNLYLSDGALCEAVTREGAGWDSDFLASIGQQLGTAESLELGRLANVNPPELLRYDAQGRRLDDVRFHPAWHLLMQALCTNRVHNLAWEEDARSGAFVARAARFMLHAQVEAGSLCPITMTFAATPLLLQMLPAPFQDWTTPLLSDRYDSHLLPGGQKRGLLIGMGMTEKQGGSDVMSNTTRAERLEDGSYRLVGHKWFFSVPQSDAHLVLAQTAGGLSCFFVPRFLPDGQRNAIRLERLKDKLGNRSNASCEVEFQDAIGWLLGLEGEGIRLILKMGGMTRFDCALGSHAMMRRAFSLAIYHAHQRHVFGNPLIQQPLMRHVLSRMALQLEGQTALLFRLARAWDRRADAKEALWARLFTPAAKFVICKRGMPFVAEAMEVLGGIGYCEESELPRLYREMPVNSIWEGSGNIMCLDVLRVLNKQAGVYDLLSEAFVEVKGQDRYFDRAVRRLQQQLRKPAEELGREITHQLFLLGCGAQMLKYASPPMAQAWCQVMLDTRGGVRLSEQIQNDLLLRATGGVCV.

FAD is bound by residues 182–191 (MGMTEKQGGS), threonine 185, serine 191, 216–218 (FFS), serine 218, 423–433 (IWEGSGNIMCL), and asparagine 429. Positions 445-541 (VYDLLSEAFV…LLRATGGVCV (97 aa)) are dsDNA-binding.

Belongs to the acyl-CoA dehydrogenase family. As to quaternary structure, homotetramer. Dimer of dimers. It depends on FAD as a cofactor.

It localises to the cytoplasm. Its function is as follows. Part of the adaptive DNA-repair response to alkylating agents. Could prevent alkylation damage by protecting DNA and destroying alkylating agents that have yet to reach their DNA target. Binds to double-stranded DNA with a preference for a DNA region that includes its own promoter. Shows weak isovaleryl-CoA dehydrogenase activity in vitro. In Escherichia coli (strain K12), this protein is Putative acyl-CoA dehydrogenase AidB (aidB).